A 531-amino-acid chain; its full sequence is T-complex protein 1 subunit zeta (531 aa).

Ala-2 carries the N-acetylalanine modification. Lys-5 bears the N6-acetyllysine mark. An ADP-binding site is contributed by Gly-39. Gly-39 contributes to the ATP binding site. Asp-90 provides a ligand contact to Mg(2+). ADP is bound by residues Gly-91, Thr-92, Thr-93, Ser-94, Thr-158, and Lys-159. 3 residues coordinate ATP: Gly-91, Thr-92, and Thr-93. N6-acetyllysine is present on Lys-199. Phosphoserine is present on Ser-205. Residue Lys-251 forms a Glycyl lysine isopeptide (Lys-Gly) (interchain with G-Cter in SUMO2) linkage. N6-acetyllysine occurs at positions 287, 365, 377, and 388. Residue Ala-411 coordinates ADP. Positions 411, 412, 496, and 501 each coordinate ATP. Position 496 (Asp-496) interacts with ADP.

It belongs to the TCP-1 chaperonin family. In terms of assembly, component of the chaperonin-containing T-complex (TRiC), a hexadecamer composed of two identical back-to-back stacked rings enclosing a protein folding chamber. Each ring is made up of eight different subunits: TCP1/CCT1, CCT2, CCT3, CCT4, CCT5, CCT6A/CCT6, CCT7, CCT8. Interacts with PACRG.

Its subcellular location is the cytoplasm. It catalyses the reaction ATP + H2O = ADP + phosphate + H(+). Functionally, component of the chaperonin-containing T-complex (TRiC), a molecular chaperone complex that assists the folding of actin, tubulin and other proteins upon ATP hydrolysis. The TRiC complex mediates the folding of WRAP53/TCAB1, thereby regulating telomere maintenance. In Bos taurus (Bovine), this protein is T-complex protein 1 subunit zeta (CCT6A).